We begin with the raw amino-acid sequence, 88 residues long: UPF0250 protein Sputcn32_2874 (88 aa).

This sequence belongs to the UPF0250 family.

The sequence is that of UPF0250 protein Sputcn32_2874 from Shewanella putrefaciens (strain CN-32 / ATCC BAA-453).